The primary structure comprises 248 residues: Allergin-1 (248 aa).

Residues 1–33 (MGDDDTPVCLSVASCKGVSCWLDKLLLWALTLS) form the signal peptide. The Extracellular segment spans residues 34–150 (ITLRNTAVDC…DESCSSCLLS (117 aa)). The Ig-like C2-type domain maps to 54 to 137 (PNLNSSMSVV…SKYSQNFNFT (84 aa)). A glycan (N-linked (GlcNAc...) asparagine) is linked at Asn-68. An intrachain disulfide couples Cys-73 to Cys-120. A glycan (N-linked (GlcNAc...) asparagine) is linked at Asn-135. The helical transmembrane segment at 151 to 171 (LLLPGVLLGLILPGLAFLIYL) threads the bilayer. Over 172–248 (KYKKGCTGKT…DDYIYSELTY (77 aa)) the chain is Cytoplasmic. 2 consecutive short sequence motifs (ITIM motif) follow at residues 216–221 (IHYTTP) and 241–246 (YIYSEL). Tyr-218 and Tyr-243 each carry phosphotyrosine.

As to quaternary structure, monomer. Interacts (tyrosine-phosphorylated) with PTPN6, PTPN11 and INPP5D. N-glycosylated. Mast cell-specific. Expressed in primary and transformed mast cells.

It localises to the cell membrane. In terms of biological role, immunoglobulin-like receptor which plays an inhibitory role in degranulation of mast cells. Negatively regulates IgE-mediated mast cell activation and suppresses the type I immediate hypersensitivity reaction. This chain is Allergin-1 (Milr1), found in Rattus norvegicus (Rat).